Reading from the N-terminus, the 86-residue chain is Anti-adapter protein IraP (86 aa).

Residues 1–36 (MKNLIAELLFKLAQKEEESKELCAQVEALEIIVTAM) are a coiled coil.

Belongs to the IraP family. In terms of assembly, interacts with RssB.

The protein localises to the cytoplasm. Its function is as follows. Inhibits RpoS proteolysis by regulating RssB activity, thereby increasing the stability of the sigma stress factor RpoS especially during phosphate starvation, but also in stationary phase and during nitrogen starvation. Its effect on RpoS stability is due to its interaction with RssB, which probably blocks the interaction of RssB with RpoS, and the consequent delivery of the RssB-RpoS complex to the ClpXP protein degradation pathway. This Shigella sonnei (strain Ss046) protein is Anti-adapter protein IraP.